A 440-amino-acid polypeptide reads, in one-letter code: Chromosomal replication initiator protein DnaA (440 aa).

The interval 1–74 is domain I, interacts with DnaA modulators; sequence MNPSQILENL…VQSGNKAIIN (74 aa). The tract at residues 74–99 is domain II; the sequence is NIQAQSAKQSNKSTKIDIAHIKAQST. The tract at residues 100 to 316 is domain III, AAA+ region; that stretch reads ILNPSFTFES…GIIISLNAYA (217 aa). ATP is bound by residues G146, G148, K149, and T150. A domain IV, binds dsDNA region spans residues 317 to 440; sequence TILGQEITLE…KNKILVKSQS (124 aa).

It belongs to the DnaA family. Oligomerizes as a right-handed, spiral filament on DNA at oriC.

Its subcellular location is the cytoplasm. In terms of biological role, plays an essential role in the initiation and regulation of chromosomal replication. ATP-DnaA binds to the origin of replication (oriC) to initiate formation of the DNA replication initiation complex once per cell cycle. Binds the DnaA box (a 9 base pair repeat at the origin) and separates the double-stranded (ds)DNA. Forms a right-handed helical filament on oriC DNA; dsDNA binds to the exterior of the filament while single-stranded (ss)DNA is stabiized in the filament's interior. The ATP-DnaA-oriC complex binds and stabilizes one strand of the AT-rich DNA unwinding element (DUE), permitting loading of DNA polymerase. After initiation quickly degrades to an ADP-DnaA complex that is not apt for DNA replication. Binds acidic phospholipids. The chain is Chromosomal replication initiator protein DnaA from Campylobacter jejuni subsp. jejuni serotype O:2 (strain ATCC 700819 / NCTC 11168).